The sequence spans 1407 residues: DNA-directed RNA polymerase subunit beta' (1407 aa).

Zn(2+) contacts are provided by Cys70, Cys72, Cys85, and Cys88. Mg(2+) contacts are provided by Asp460, Asp462, and Asp464. The Zn(2+) site is built by Cys814, Cys888, Cys895, and Cys898. Lys972 carries the N6-acetyllysine modification.

This sequence belongs to the RNA polymerase beta' chain family. The RNAP catalytic core consists of 2 alpha, 1 beta, 1 beta' and 1 omega subunit. When a sigma factor is associated with the core the holoenzyme is formed, which can initiate transcription. The cofactor is Mg(2+). Zn(2+) serves as cofactor.

The catalysed reaction is RNA(n) + a ribonucleoside 5'-triphosphate = RNA(n+1) + diphosphate. Functionally, DNA-dependent RNA polymerase catalyzes the transcription of DNA into RNA using the four ribonucleoside triphosphates as substrates. The chain is DNA-directed RNA polymerase subunit beta' from Escherichia coli O1:K1 / APEC.